The chain runs to 939 residues: Collagen-like protein 3 (939 aa).

N-linked (GlcNAc...) asparagine; by host glycans are attached at residues Asn15, Asn35, Asn39, and Asn82. The span at 84–95 (SGSSGPSGPQGP) shows a compositional bias: low complexity. 2 disordered regions span residues 84-332 (SGSS…DLGN) and 358-697 (SIKG…KGEA). Collagen-like domains lie at 88–147 (GPSG…NGDK), 148–207 (GNKG…KGDK), 211–330 (GNKG…SPDL), 364–423 (GDKG…SGAD), 427–486 (GDKG…KGEK), 493–552 (GESG…KGSK), 564–622 (GDKG…KGDV), and 638–697 (GDKG…KGEA). 13 stretches are compositionally biased toward basic and acidic residues: residues 96–110 (KGEK…DKGE), 123–182 (DADK…DPGI), 189–230 (DADK…DIGL), 237–260 (DADK…DIGP), 267–288 (DADK…KGTK), 297–314 (KGDK…DKGE), 360–371 (KGDKGDKGDTGL), 378–416 (DADK…DTGL), 423–491 (DADK…DVGI), 498–527 (DADK…DTGI), 537–552 (KGDK…KGSK), 560–580 (KGDK…DIGI), and 589–684 (KGDK…DKGD). N-linked (GlcNAc...) asparagine; by host glycans are attached at residues Asn788, Asn820, Asn858, Asn919, and Asn925. The interval 896-923 (NGETGAPTTDSGTNYGAGGGGGGNGTQG) is disordered. Over residues 910–923 (YGAGGGGGGNGTQG) the composition is skewed to gly residues.

May be hydroxylated on lysine by the viral-encoded procollagen-lysine,2-oxoglutarate 5-dioxygenase.

The protein resides in the virion. In terms of biological role, may participate in the formation of a layer of cross-linked glycosylated fibrils at the viral surface thus giving it a hairy-like appearance. The chain is Collagen-like protein 3 from Acanthamoeba polyphaga (Amoeba).